Consider the following 421-residue polypeptide: Zinc finger protein 584 (421 aa).

The KRAB domain maps to 17–88; sequence VMFEDVTVYF…SWVDVTPVSR (72 aa). Basic and acidic residues predominate over residues 120 to 129; sequence QHQDTHSEGK. Residues 120 to 146 are disordered; the sequence is QHQDTHSEGKPRRHTEHGAAFPPGSSC. C2H2-type zinc fingers lie at residues 159–181, 214–236, 242–264, 270–292, 298–320, 326–348, 354–376, and 382–404; these read FKCS…LITH, HVCN…QKVH, FKCS…QRIH, YECS…RKVH, YECT…QRVH, FECK…WKVH, YECS…QQFH, and YECT…KKVH. Residues 402–421 form a disordered region; the sequence is KVHTPERRQEDRAHGKVVSC. Over residues 404–415 the composition is skewed to basic and acidic residues; the sequence is HTPERRQEDRAH.

It belongs to the krueppel C2H2-type zinc-finger protein family.

It is found in the nucleus. May be involved in transcriptional regulation. In Homo sapiens (Human), this protein is Zinc finger protein 584 (ZNF584).